Here is a 435-residue protein sequence, read N- to C-terminus: F-box only protein 9 (435 aa).

The disordered stretch occupies residues 1 to 25 (MAEAEEDCHSDAVRVGDEGHESPAE). A compositionally biased stretch (basic and acidic residues) spans 7–25 (DCHSDAVRVGDEGHESPAE). One copy of the TPR repeat lies at 82–115 (ARELFLKAVEEEQNGALYEAIKFYRRAMQLVPDI). A Phosphoserine modification is found at S124. The F-box domain occupies 173 to 224 (QTHISVLPMEVLMYIFRWVVSSDLDLRSLEQLSLVCRGFYICARDPEIWRLA).

In terms of assembly, part of the SCF (SKP1-CUL1-F-box) E3 ubiquitin-protein ligase complex SCF(FBXO9) composed of CUL1, SKP1, RBX1 and FBXO9. Interacts with TTI1 and TELO2; when TTI1 and TELO2 are phosphorylated by CK2.

The protein resides in the cytoplasm. It functions in the pathway protein modification; protein ubiquitination. Substrate recognition component of a SCF (SKP1-CUL1-F-box protein) E3 ubiquitin-protein ligase complex which mediates the ubiquitination and subsequent proteasomal degradation of target proteins and plays a role in several biological processes such as cell cycle, cell proliferation, or maintenance of chromosome stability. Ubiquitinates mTORC1-bound TTI1 and TELO2 when they are phosphorylated by CK2 following growth factor deprivation, leading to their degradation. In contrast, does not mediate ubiquitination of TTI1 and TELO2 when they are part of the mTORC2 complex. As a consequence, mTORC1 is inactivated to restrain cell growth and protein translation, while mTORC2 is the activated due to the relief of feedback inhibition by mTORC1. Plays a role in maintaining epithelial cell survival by regulating the turn-over of chromatin modulator PRMT4 through ubiquitination and degradation by the proteasomal pathway. Also regulates PPARgamma stability by facilitating PPARgamma/PPARG ubiquitination and thereby plays a role in adipocyte differentiation. The chain is F-box only protein 9 (Fbxo9) from Rattus norvegicus (Rat).